We begin with the raw amino-acid sequence, 493 residues long: Leucine-rich repeat-containing protein 14 (493 aa).

An LRR 1; degenerate repeat occupies 111–146 (KHALRVLDMTGLLDDGVEQDPETMSMWDCTAAVART). An LRR 2; degenerate repeat occupies 194-218 (RLCCRDLRAEDLPMRNTVALLQLLD). The LRR 3; degenerate repeat unit spans residues 219-246 (AGCLRRIDLRFNNLGLRGLSVIIPHVAR). The stretch at 247–282 (FQHLASLRLHYVHGDSRQPSVDGEDNFRYFLAQMGR) is one LRR 4; degenerate repeat. 5 LRR repeats span residues 283 to 307 (FMCL…LSTL), 308 to 339 (QRPL…AHLK), 340 to 360 (KLDL…QGLL), 364 to 391 (ATTL…TLTR), and 392 to 416 (CASL…LLRD).

Belongs to the PRAME family. LRRC14 subfamily. As to quaternary structure, interacts with IKBKB; disrupts IKBKB-IKBKG interaction preventing I-kappa-B-kinase (IKK) core complex formation and leading to a decrease of IKBKB phosphorylation and NF-kappaB activation. Interacts with CHUK.

The protein resides in the cytoplasm. In terms of biological role, negatively regulates Toll-like receptor-mediated NF-kappa-B signaling by disrupting IKK core complex formation through interaction with IKBKB. This Mus musculus (Mouse) protein is Leucine-rich repeat-containing protein 14.